The primary structure comprises 681 residues: MPEARQILVTSALPYANGSIHLGHMLEYIQTDIWVRFQKQRGNQCVYVCADDAHGSAIMLRAEKEGITPEQLIAYVQAEHSADFADFLVDFDNYHSTHAEENRALSEAIYLRLRDAGHIATRSVTQYFDPEKGMFLADRFIKGTCPKCGAEDQYGDNCEKCGATYEPTELKDPRSAISGATPVLKDSKHFFFKLPDFEAMLKEWTRSGTLQEAVANKIAEWLDGGLQEWDISRDAPYFGFEIPDEPGKYFYVWLDAPIGYMASFKNLCARRPELDFDAFWCKDSKAELYHFIGKDIVNFHTLFWPAMLEGAGFRKPTAVNVHGYLTVNGQKMSKSRGTFIKARTYLDHLNPEYLRYYYASKLSRGVDDLDLNLEDFVQKVNSDLVGKVVNIASRCAGFIHKGNAGLMVDANPEPELWEAFQVAAPAIAEAYEGRDFGRAMREIMALADRANAWIADKAPWALNKQEGKQTEVQEICAFGINLFRQLVIFLKPVLPNLATAAEAFLNVAPLTWQDHTLRLANHPLNPFTPLMTRIEPAKIDAMIEASKEDLAAQNSEAAAPQGNGELVKEPLAPEIDFNAFAAVDLRIALIEKAEFVEGADKLLRLTLDIGDAKRNVFSGIKSAYPEPSELEGRLTLYVANLAPRKMKFGLSEGMVLAAGPGGSEIFLLSPDAGAKPGQRVH.

Residues 14–24 (PYANGSIHLGH) carry the 'HIGH' region motif. Positions 145, 148, 158, and 161 each coordinate Zn(2+). The short motif at 331-335 (KMSKS) is the 'KMSKS' region element. ATP is bound at residue lysine 334. A tRNA-binding domain is found at 579 to 681 (AFAAVDLRIA…AGAKPGQRVH (103 aa)).

Belongs to the class-I aminoacyl-tRNA synthetase family. MetG type 1 subfamily. Homodimer. It depends on Zn(2+) as a cofactor.

The protein resides in the cytoplasm. The catalysed reaction is tRNA(Met) + L-methionine + ATP = L-methionyl-tRNA(Met) + AMP + diphosphate. Functionally, is required not only for elongation of protein synthesis but also for the initiation of all mRNA translation through initiator tRNA(fMet) aminoacylation. In Azotobacter vinelandii (strain DJ / ATCC BAA-1303), this protein is Methionine--tRNA ligase.